The chain runs to 71 residues: Putative RNA-binding regulatory peptide (71 aa).

As to quaternary structure, interacts with IGF2BP1 (via KH3 and KH4 domains); the interaction results in increased binding of IGF2BP1 to N6-methyladenosine (m6A)-containing mRNAs. As to expression, detected in colon (at protein level).

Its function is as follows. Enhances binding of IGF2BP1 to N6-methyladenosine (m6A)-containing mRNAs, thereby contributing to increased mRNA stability. Also increases the interaction of IGF2BP1 with RNA stabilizers ELAVL1/HUR, MATR3 and PABPC1, and increases the interaction of RNA stabilizers ELAVL1/HUR, MATR3 and PABPC1 with m6A-containing mRNAs. Contributes to MYC stability by enhancing binding of IGF2BP1 to m6A-containing MYC mRNAs and increasing recruitment of RNA stabilizing proteins to m6A-containing MYC mRNAs. In Homo sapiens (Human), this protein is Putative RNA-binding regulatory peptide.